The sequence spans 612 residues: Peroxisomal carnitine O-octanoyltransferase (612 aa).

Methionine 1 bears the N-acetylmethionine mark. N6-succinyllysine occurs at positions 40 and 57. Catalysis depends on histidine 327, which acts as the Proton acceptor. CoA contacts are provided by residues lysine 406 and 410–417; that span reads KEKQLHPD. Lysine 406 carries the post-translational modification N6-acetyllysine; alternate. Lysine 406 is subject to N6-succinyllysine; alternate. The (R)-carnitine site is built by tyrosine 439, threonine 441, and threonine 452. The Microbody targeting signal signature appears at 610–612; the sequence is PHL.

The protein belongs to the carnitine/choline acetyltransferase family. Monomer.

Its subcellular location is the peroxisome. The catalysed reaction is octanoyl-CoA + (R)-carnitine = O-octanoyl-(R)-carnitine + CoA. It carries out the reaction 4,8-dimethylnonanoyl-CoA + (R)-carnitine = O-4,8-dimethylnonanoyl-(R)-carnitine + CoA. It participates in lipid metabolism; fatty acid beta-oxidation. Beta-oxidation of fatty acids. The highest activity concerns the C6 to C10 chain length substrate. The protein is Peroxisomal carnitine O-octanoyltransferase (CROT) of Bos taurus (Bovine).